A 187-amino-acid polypeptide reads, in one-letter code: T-cell receptor-associated transmembrane adapter 1 (187 aa).

Topologically, residues 1–7 (MSGSSGC) are extracellular. A helical; Signal-anchor for type III membrane protein membrane pass occupies residues 8–28 (PFFLWGLLAFLGLALVISLIF). Over 29-187 (NISHYVEKQR…LIRAKREPVI (159 aa)) the chain is Cytoplasmic. Residue serine 46 is modified to Phosphoserine. Phosphotyrosine is present on tyrosine 80. The segment at 80 to 83 (YEQM) is interaction with PIK3R1. The disordered stretch occupies residues 117–138 (SVKGKRRRPRKQNTNVSDRGKD).

In terms of assembly, homodimer; disulfide-linked. Interacts with CD3Z. When phosphorylated, interacts with PIK3R1. In terms of processing, phosphorylated on tyrosines upon TCR activation. Present in T-cells (at protein level).

Its subcellular location is the cell membrane. In terms of biological role, stabilizes the TCR (T-cell antigen receptor)/CD3 complex at the surface of T-cells. The chain is T-cell receptor-associated transmembrane adapter 1 (Trat1) from Mus musculus (Mouse).